The chain runs to 313 residues: Ribosomal RNA small subunit methyltransferase H (313 aa).

Residues 34-36, Asp53, Phe80, Asp101, and Gln108 each bind S-adenosyl-L-methionine; that span reads GGH.

Belongs to the methyltransferase superfamily. RsmH family.

The protein resides in the cytoplasm. The enzyme catalyses cytidine(1402) in 16S rRNA + S-adenosyl-L-methionine = N(4)-methylcytidine(1402) in 16S rRNA + S-adenosyl-L-homocysteine + H(+). Its function is as follows. Specifically methylates the N4 position of cytidine in position 1402 (C1402) of 16S rRNA. In Lacticaseibacillus paracasei (strain ATCC 334 / BCRC 17002 / CCUG 31169 / CIP 107868 / KCTC 3260 / NRRL B-441) (Lactobacillus paracasei), this protein is Ribosomal RNA small subunit methyltransferase H.